Here is a 126-residue protein sequence, read N- to C-terminus: Aspartate 1-decarboxylase (126 aa).

S25 (schiff-base intermediate with substrate; via pyruvic acid) is an active-site residue. S25 carries the post-translational modification Pyruvic acid (Ser). T57 is a binding site for substrate. Residue Y58 is the Proton donor of the active site. A substrate-binding site is contributed by 73–75 (GAA).

The protein belongs to the PanD family. Heterooctamer of four alpha and four beta subunits. It depends on pyruvate as a cofactor. In terms of processing, is synthesized initially as an inactive proenzyme, which is activated by self-cleavage at a specific serine bond to produce a beta-subunit with a hydroxyl group at its C-terminus and an alpha-subunit with a pyruvoyl group at its N-terminus.

The protein localises to the cytoplasm. It catalyses the reaction L-aspartate + H(+) = beta-alanine + CO2. It functions in the pathway cofactor biosynthesis; (R)-pantothenate biosynthesis; beta-alanine from L-aspartate: step 1/1. Its function is as follows. Catalyzes the pyruvoyl-dependent decarboxylation of aspartate to produce beta-alanine. The sequence is that of Aspartate 1-decarboxylase from Halorhodospira halophila (strain DSM 244 / SL1) (Ectothiorhodospira halophila (strain DSM 244 / SL1)).